The sequence spans 409 residues: Calsequestrin-2 (409 aa).

Positions 1 to 19 (MKRAHLFVVGVYLLSSCRA) are cleaved as a signal peptide. A Phosphotyrosine modification is found at tyrosine 282. Residue asparagine 335 is glycosylated (N-linked (GlcNAc...) asparagine). The segment at 364-409 (DVLSGKINTEDDDNEDEDDDDDNDDDDDDNGNSDEEDNDDSDEDDE) is disordered. Over residues 373 to 409 (EDDDNEDEDDDDDNDDDDDDNGNSDEEDNDDSDEDDE) the composition is skewed to acidic residues.

Belongs to the calsequestrin family. In terms of assembly, monomer, homodimer and homooligomer. Mostly monomeric in the absence of calcium. Forms higher oligomers in a calcium-dependent manner. Dimers associate to form tetramers, that then form linear homomer chains. Interacts with ASPH and TRDN. Phosphorylation in the C-terminus, probably by CK2, moderately increases calcium buffering capacity. In terms of processing, N-glycosylated. As to expression, detected in heart muscle (at protein level).

The protein resides in the sarcoplasmic reticulum lumen. In terms of biological role, calsequestrin is a high-capacity, moderate affinity, calcium-binding protein and thus acts as an internal calcium store in muscle. Calcium ions are bound by clusters of acidic residues at the protein surface, especially at the interface between subunits. Can bind around 60 Ca(2+) ions. Regulates the release of lumenal Ca(2+) via the calcium release channel RYR2; this plays an important role in triggering muscle contraction. Plays a role in excitation-contraction coupling in the heart and in regulating the rate of heart beats. The polypeptide is Calsequestrin-2 (CASQ2) (Oryctolagus cuniculus (Rabbit)).